Reading from the N-terminus, the 512-residue chain is Glutathione-binding protein GsiB (512 aa).

A signal peptide spans 1-26 (MTQFITHKWLAALGLASSIAAFPALA).

The protein belongs to the bacterial solute-binding protein 5 family. In terms of assembly, the complex is composed of two ATP-binding proteins (GsiA), two transmembrane proteins (GsiC and GsiD) and a solute-binding protein (GsiB).

The protein resides in the periplasm. In terms of biological role, part of the ABC transporter complex GsiABCD involved in glutathione import. Binds glutathione. The chain is Glutathione-binding protein GsiB from Salmonella choleraesuis (strain SC-B67).